We begin with the raw amino-acid sequence, 199 residues long: dITP/XTP pyrophosphatase (199 aa).

Residue 7 to 12 coordinates substrate; sequence TTNLHK. Positions 41 and 70 each coordinate Mg(2+). The Proton acceptor role is filled by Asp70. Substrate-binding positions include Ser71, 154–157, Lys177, and 182–183; these read FGYD and HR.

This sequence belongs to the HAM1 NTPase family. In terms of assembly, homodimer. Requires Mg(2+) as cofactor.

It catalyses the reaction XTP + H2O = XMP + diphosphate + H(+). The catalysed reaction is dITP + H2O = dIMP + diphosphate + H(+). The enzyme catalyses ITP + H2O = IMP + diphosphate + H(+). Functionally, pyrophosphatase that catalyzes the hydrolysis of nucleoside triphosphates to their monophosphate derivatives, with a high preference for the non-canonical purine nucleotides XTP (xanthosine triphosphate), dITP (deoxyinosine triphosphate) and ITP. Seems to function as a house-cleaning enzyme that removes non-canonical purine nucleotides from the nucleotide pool, thus preventing their incorporation into DNA/RNA and avoiding chromosomal lesions. The protein is dITP/XTP pyrophosphatase of Protochlamydia amoebophila (strain UWE25).